Consider the following 486-residue polypeptide: Protein nucleotidyltransferase YdiU (486 aa).

Residues G90, G92, R93, K113, D125, G126, R176, and R183 each coordinate ATP. D252 functions as the Proton acceptor in the catalytic mechanism. N253 and D262 together coordinate Mg(2+). D262 is a binding site for ATP.

It belongs to the SELO family. Mg(2+) serves as cofactor. The cofactor is Mn(2+).

It catalyses the reaction L-seryl-[protein] + ATP = 3-O-(5'-adenylyl)-L-seryl-[protein] + diphosphate. The catalysed reaction is L-threonyl-[protein] + ATP = 3-O-(5'-adenylyl)-L-threonyl-[protein] + diphosphate. The enzyme catalyses L-tyrosyl-[protein] + ATP = O-(5'-adenylyl)-L-tyrosyl-[protein] + diphosphate. It carries out the reaction L-histidyl-[protein] + UTP = N(tele)-(5'-uridylyl)-L-histidyl-[protein] + diphosphate. It catalyses the reaction L-seryl-[protein] + UTP = O-(5'-uridylyl)-L-seryl-[protein] + diphosphate. The catalysed reaction is L-tyrosyl-[protein] + UTP = O-(5'-uridylyl)-L-tyrosyl-[protein] + diphosphate. Functionally, nucleotidyltransferase involved in the post-translational modification of proteins. It can catalyze the addition of adenosine monophosphate (AMP) or uridine monophosphate (UMP) to a protein, resulting in modifications known as AMPylation and UMPylation. The sequence is that of Protein nucleotidyltransferase YdiU from Pseudomonas putida (strain GB-1).